The primary structure comprises 2703 residues: Neurogenic locus Notch protein (2703 aa).

A signal peptide spans 1–52 (MQSQRSRRRSRAPNTWICFWINKMHAVASLPASLPLLLLTLAFANLPNTVRG). The Extracellular segment spans residues 53–1745 (TDTALVAASC…NGEPPANVKY (1693 aa)). EGF-like domains follow at residues 58–95 (VAAS…DYCE), 96–136 (HRNP…SLCE), 139–176 (VPNA…ERCE), and 177–215 (TKNL…DTCS). Disulfide bonds link Cys62–Cys73, Cys67–Cys83, Cys85–Cys94, Cys100–Cys111, Cys105–Cys124, Cys126–Cys135, Cys143–Cys154, Cys148–Cys164, Cys166–Cys175, Cys181–Cys192, Cys186–Cys203, Cys205–Cys214, Cys221–Cys232, Cys226–Cys241, Cys243–Cys252, Cys259–Cys270, Cys264–Cys279, Cys281–Cys290, Cys297–Cys308, Cys302–Cys317, Cys319–Cys328, Cys335–Cys349, Cys343–Cys358, and Cys360–Cys369. An O-linked (Fuc...) threonine glycan is attached at Thr72. A glycan (O-linked (Fuc...) threonine) is linked at Thr110. Thr153 carries O-linked (Fuc...) threonine glycosylation. The O-linked (Glc...) serine glycan is linked to Ser183. The O-linked (Fuc...) threonine glycan is linked to Thr191. A glycan (O-linked (GlcNAc...) threonine) is linked at Thr210. The region spanning 217 to 253 (DIEECQSNPCKYGGTCVNTHGSYQCMCPTGYTGKDCD) is the EGF-like 5; calcium-binding domain. O-linked (Glc...) serine glycosylation occurs at Ser223. A glycan (O-linked (Fuc...) threonine) is linked at Thr231. In terms of domain architecture, EGF-like 6 spans 255–291 (KYKPCSPSPCQNGGICRSNGLSYECKCPKGFEGKNCE). In terms of domain architecture, EGF-like 7; calcium-binding spans 293 to 329 (NYDDCLGHLCQNGGTCIDGISDYTCRCPPNFTGRFCQ). A glycan (O-linked (Fuc...) threonine) is linked at Thr307. A glycan (N-linked (GlcNAc...) asparagine) is linked at Asn322. In terms of domain architecture, EGF-like 8; calcium-binding spans 331–370 (DVDECAQRDHPVCQNGATCTNTHGSYSCICVNGWAGLDCS). O-linked (Fuc...) threonine glycosylation is present at Thr348. N-linked (GlcNAc...) asparagine glycosylation occurs at Asn371. One can recognise an EGF-like 9; calcium-binding domain in the interval 372–408 (NTDDCKQAACFYGATCIDGVGSFYCQCTKGKTGLLCH). Intrachain disulfides connect Cys376–Cys387, Cys381–Cys396, Cys398–Cys407, Cys413–Cys424, Cys418–Cys435, Cys437–Cys446, Cys453–Cys465, and Cys459–Cys474. An O-linked (Fuc...) threonine glycan is attached at Thr386. One can recognise an EGF-like 10 domain in the interval 409–447 (LDDACTSNPCHADAICDTSPINGSYACSCATGYKGVDCS). O-linked (Glc...) serine glycosylation is present at Ser427. Residue Asn430 is glycosylated (N-linked (GlcNAc...) asparagine). The EGF-like 11; calcium-binding domain maps to 449–486 (DIDECDQGSPCEHNGICVNTPGSYRCNCSQGFTGPRCE). An N-linked (GlcNAc...) asparagine glycan is attached at Asn475. Intrachain disulfides connect Cys476–Cys485, Cys492–Cys503, Cys497–Cys512, Cys514–Cys523, Cys530–Cys541, Cys535–Cys550, Cys552–Cys561, Cys568–Cys579, Cys573–Cys588, Cys590–Cys599, Cys606–Cys616, Cys611–Cys625, Cys627–Cys636, Cys643–Cys654, Cys648–Cys663, Cys665–Cys674, Cys681–Cys692, Cys686–Cys701, Cys703–Cys712, Cys719–Cys730, Cys724–Cys739, Cys741–Cys750, Cys757–Cys768, Cys762–Cys777, Cys779–Cys788, Cys795–Cys806, Cys800–Cys815, Cys817–Cys826, Cys833–Cys844, Cys838–Cys853, Cys855–Cys864, Cys871–Cys882, Cys876–Cys893, Cys895–Cys904, Cys911–Cys923, Cys917–Cys932, Cys934–Cys943, Cys950–Cys961, Cys955–Cys970, Cys972–Cys981, Cys988–Cys999, Cys993–Cys1008, Cys1010–Cys1019, Cys1026–Cys1037, Cys1031–Cys1046, Cys1048–Cys1057, Cys1064–Cys1075, Cys1069–Cys1084, Cys1086–Cys1095, Cys1102–Cys1113, Cys1107–Cys1122, Cys1124–Cys1133, Cys1155–Cys1160, Cys1171–Cys1180, Cys1187–Cys1198, Cys1192–Cys1207, Cys1209–Cys1218, Cys1225–Cys1236, Cys1230–Cys1245, Cys1247–Cys1256, Cys1263–Cys1274, Cys1268–Cys1283, Cys1285–Cys1294, Cys1301–Cys1314, Cys1306–Cys1323, Cys1325–Cys1334, Cys1341–Cys1352, Cys1346–Cys1361, Cys1363–Cys1372, Cys1379–Cys1389, Cys1384–Cys1400, Cys1402–Cys1411, Cys1419–Cys1430, Cys1424–Cys1439, Cys1441–Cys1450, Cys1482–Cys1505, Cys1487–Cys1500, and Cys1496–Cys1512. Thr481 carries an O-linked (GlcNAc...) threonine glycan. The EGF-like 12; calcium-binding domain maps to 488 to 524 (NINECESHPCQNEGSCLDDPGTFRCVCMPGFTGTQCE). O-linked (Glc...) serine glycosylation is present at Ser494. A glycan (O-linked (Fuc...) serine) is linked at Ser502. Thr519 carries an O-linked (GlcNAc...) threonine glycan. In terms of domain architecture, EGF-like 13; calcium-binding spans 526 to 562 (DIDECQSNPCLNDGTCHDKINGFKCSCALGFTGARCQ). An O-linked (Glc...) serine glycan is attached at Ser532. Residues 564–600 (NIDDCQSQPCRNRGICHDSIAGYSCECPPGYTGTSCE) enclose the EGF-like 14; calcium-binding domain. Ser570 carries O-linked (Glc...) serine glycosylation. Thr595 carries an O-linked (GlcNAc...) threonine glycan. Positions 602-637 (NINDCDSNPCHRGKCIDDVNSFKCLCDPGYTGYICQ) constitute an EGF-like 15; calcium-binding domain. Ser608 is a glycosylation site (O-linked (Glc...) serine). Positions 639 to 675 (QINECESNPCQFDGHCQDRVGSYYCQCQAGTSGKNCE) constitute an EGF-like 16; calcium-binding domain. A glycan (O-linked (Glc...) serine) is linked at Ser645. In terms of domain architecture, EGF-like 17; calcium-binding spans 677 to 713 (NVNECHSNPCNNGATCIDGINSYKCQCVPGFTGQHCE). O-linked (Glc...) serine glycosylation occurs at Ser683. Thr691 is a glycosylation site (O-linked (Fuc...) threonine). Residues 715-751 (NVDECISSPCANNGVCIDQVNGYKCECPRGFYDAHCL) form the EGF-like 18; calcium-binding domain. An O-linked (Glc...) serine glycan is attached at Ser721. The EGF-like 19; calcium-binding domain maps to 753 to 789 (DVDECASNPCVNEGRCEDGINEFICHCPPGYTGKRCE). A glycan (O-linked (Glc...) serine) is linked at Ser759. In terms of domain architecture, EGF-like 20; calcium-binding spans 791-827 (DIDECSSNPCQHGGTCYDKLNAFSCQCMPGYTGQKCE). Ser797 carries O-linked (Glc...) serine glycosylation. Residue Thr805 is glycosylated (O-linked (Fuc...) threonine). Thr822 carries O-linked (GlcNAc...) threonine glycosylation. Residues 829–865 (NIDDCVTNPCGNGGTCIDKVNGYKCVCKVPFTGRDCE) enclose the EGF-like 21; calcium-binding domain. Thr843 carries an O-linked (Fuc...) threonine glycan. One can recognise an EGF-like 22 domain in the interval 867-905 (KMDPCASNRCKNEAKCTPSSNFLDFSCTCKLGYTGRYCD). An EGF-like 23; calcium-binding domain is found at 907–944 (DIDECSLSSPCRNGASCLNVPGSYRCLCTKGYEGRDCA). Ser922 is a glycosylation site (O-linked (Fuc...) serine). The 37-residue stretch at 946–982 (NTDDCASFPCQNGGTCLDGIGDYSCLCVDGFDGKHCE) folds into the EGF-like 24; calcium-binding domain. Residue Ser952 is glycosylated (O-linked (Glc...) serine). O-linked (Fuc...) threonine glycosylation is present at Thr960. Residues 984-1020 (DINECLSQPCQNGATCSQYVNSYTCTCPLGFSGINCQ) enclose the EGF-like 25 domain. An O-linked (Glc...) serine glycan is attached at Ser990. Thr998 is a glycosylation site (O-linked (Fuc...) threonine). Residues 1022-1058 (NDEDCTESSCLNGGSCIDGINGYNCSCLAGYSGANCQ) form the EGF-like 26; calcium-binding domain. O-linked (Fuc...) serine glycosylation occurs at Ser1036. Residue Asn1045 is glycosylated (N-linked (GlcNAc...) asparagine). EGF-like domains follow at residues 1060–1096 (KLNK…KQCS), 1098–1134 (YVDW…KLCD), and 1136–1181 (QTIS…SYCQ). Residue Ser1066 is glycosylated (O-linked (Glc...) serine). Thr1074 is a glycosylation site (O-linked (Fuc...) threonine). Thr1112 is a glycosylation site (O-linked (Fuc...) threonine). N-linked (GlcNAc...) asparagine glycosylation occurs at Asn1157. Residues 1183–1219 (EIDECQSQPCQNGGTCRDLIGAYECQCRQGFQGQNCE) enclose the EGF-like 30; calcium-binding domain. The O-linked (Glc...) serine glycan is linked to Ser1189. Thr1197 carries an O-linked (Fuc...) threonine glycan. Residues 1221–1257 (NIDDCAPNPCQNGGTCHDRVMNFSCSCPPGTMGIICE) form the EGF-like 31; calcium-binding domain. O-linked (Fuc...) threonine glycosylation is present at Thr1235. Asn1242 is a glycosylation site (N-linked (GlcNAc...) asparagine). In terms of domain architecture, EGF-like 32; calcium-binding spans 1259 to 1295 (NKDDCKPGACHNNGSCIDRVGGFECVCQPGFVGARCE). A glycan (N-linked (GlcNAc...) asparagine) is linked at Asn1271. A glycan (O-linked (Fuc...) serine) is linked at Ser1273. EGF-like domains follow at residues 1297–1335 (DINE…RHCE), 1337–1373 (KVDF…KNCE), 1375–1412 (SGQD…EHCE), and 1415–1451 (TLDE…KRCD). A glycan (O-linked (Glc...) serine) is linked at Ser1303. Ser1381 carries O-linked (Glc...) serine glycosylation. 3 LNR repeats span residues 1482–1521 (CDKR…PWAN), 1522–1557 (CTAN…RKLK), and 1559–1599 (CDSL…TQSP). Residue Asn1521 is glycosylated (N-linked (GlcNAc...) asparagine). Intrachain disulfides connect Cys1522/Cys1545, Cys1527/Cys1540, Cys1536/Cys1552, Cys1559/Cys1585, Cys1567/Cys1580, and Cys1576/Cys1592. N-linked (GlcNAc...) asparagine glycans are attached at residues Asn1594 and Asn1627. Residues 1746 to 1766 (VITGIILVIIALAFFGMVLST) form a helical membrane-spanning segment. Topologically, residues 1767-2703 (QRKRAHGVTW…ANKGSEAIYI (937 aa)) are cytoplasmic. The segment at 1810–1850 (QSQGVGQPGAHWSDDESDMPLPKRQRSDPVSGVGLGNNGGY) is disordered. ANK repeat units follow at residues 1901–1945 (CGLT…ELNA), 1950–1979 (TGET…DANC), 1983–2013 (TGRT…NLNA), 2017–2046 (DGTT…DINA), 2050–2079 (SGKT…NRDA), 2083–2112 (KDET…NREI), and 2116–2139 (MDRL…LDEH). A disordered region spans residues 2172 to 2257 (TVISAGNGGN…LTGGVSGVPG (86 aa)). The span at 2228–2238 (KKTSAASKKAA) shows a compositional bias: low complexity. The segment at 2325 to 2328 (PPSY) is interaction with Nedd4. 4 disordered regions span residues 2399–2452 (SGAG…PTSP), 2488–2524 (GGGG…APPQ), 2579–2620 (LDLN…PSSQ), and 2632–2703 (PSSQ…AIYI). The segment covering 2414–2429 (PYSNQSPPHSVQSSLA) has biased composition (polar residues). Position 2447 is a phosphoserine (Ser2447). Positions 2488–2497 (GGGGGGGVGQ) are enriched in gly residues. A compositionally biased stretch (low complexity) spans 2598–2619 (PPSIQSSMSGSSPSTNMLSPSS). Positions 2632–2653 (PSSQHSGGHTPQHLVQTLDSYP) are enriched in polar residues. The span at 2659 to 2675 (SPGHWSSSSPRSNSDWS) shows a compositional bias: low complexity. The span at 2677–2687 (GVQSPAANNLY) shows a compositional bias: polar residues.

This sequence belongs to the NOTCH family. As to quaternary structure, homomer. Interacts with Su(H) when activated. Interacts with Dx via its ANK repeats. Interacts with Delta via the EGF repeats and the Delta EGF repeats. Interacts with Nedd4 and Su(dx). Interacts with O-fut1; the interaction glycosylates N and transports N to early endosomes. Interacts with Akap200; the interaction stabilizes N/Notch protein levels by preventing Cbl-mediated ubiquitination and subsequent lysosomal degradation of N/Notch. In terms of processing, upon binding its ligands such as Delta or Serrate, it is cleaved (S2 cleavage) in its extracellular domain, close to the transmembrane domain. S2 cleavage is probably mediated by Kuz. It is then cleaved (S3 cleavage) downstream of its transmembrane domain, releasing it from the cell membrane. S3 cleavage requires Psn. Post-translationally, O-glycosylated. Three forms of O-glycosylation (O-fucosylation, O-glucosylation and O-GlcNAcylation) are detected. O-fucosylated by O-fut1 and fng in the EGF repeat domain inhibits both Serrate/Ser- and Delta/Dl-binding. O-glucosylation by rumi in the endoplasmic reticulum is necessary for correct folding and signaling. Ubiquitinated by various ubiquitin ligases; which promotes ligand-independent endocytosis and proteasomal degradation. Ubiquitinated by Nedd4. May also be ubiquitinated by Su(dx) and Cbl. Mono-ubiquitinated, possibly by dx/deltex; this may be involved in the ESCRT-III mediated targeting to multivesicular bodies.

It localises to the cell membrane. It is found in the endosome. The protein localises to the multivesicular body. Its subcellular location is the nucleus. Its function is as follows. Essential signaling protein which has a major role in many developmental processes. Functions as a receptor for membrane-bound ligands Delta and Serrate to regulate cell-fate determination. Upon ligand activation, and releasing from the cell membrane, the Notch intracellular domain (NICD) forms a transcriptional activator complex with Su(H) (Suppressor of hairless) and activates genes of the E(spl) complex. Regulates oogenesis, the differentiation of the ectoderm and the development of the central and peripheral nervous system, eye, wing disk, muscles and segmental appendages such as antennae and legs, through lateral inhibition or induction. Regulates neuroblast self-renewal, identity and proliferation through the regulation of bHLH-O proteins; in larval brains, involved in the maintenance of type II neuroblast self-renewal and identity by suppressing erm expression together with pnt; might also regulate dpn expression through the activation of the transcriptional regulator Su(H). Targeted for ESCRT-mediated endosomal sequestration and lysosomal degradation by various E3 ubiquitin ligases to regulate the Notch signaling pathway. Can undergo ligand-dependent and non-canonical ligand-independent activation. Ligand-independent activation is dependent on endosome acidification and probably occurs in late endosomes or lysosome. Ectopic ligand-independent activation occurs when disruption of the endolysosomal pathway, particularly of the ESCRT-III complex, prevents sequestration of the receptor in intraluminal vesicles of multivesicular bodies. The chain is Neurogenic locus Notch protein from Drosophila melanogaster (Fruit fly).